Here is a 382-residue protein sequence, read N- to C-terminus: ATP phosphoribosyltransferase regulatory subunit (382 aa).

This sequence belongs to the class-II aminoacyl-tRNA synthetase family. HisZ subfamily. In terms of assembly, heteromultimer composed of HisG and HisZ subunits.

The protein localises to the cytoplasm. It participates in amino-acid biosynthesis; L-histidine biosynthesis; L-histidine from 5-phospho-alpha-D-ribose 1-diphosphate: step 1/9. Required for the first step of histidine biosynthesis. May allow the feedback regulation of ATP phosphoribosyltransferase activity by histidine. This chain is ATP phosphoribosyltransferase regulatory subunit, found in Lacticaseibacillus casei (strain BL23) (Lactobacillus casei).